The following is a 391-amino-acid chain: GTPase Obg (391 aa).

The Obg domain occupies 1–159 (MKFIDEALIR…RDLLLELMLL (159 aa)). Residues 160 to 333 (ADVGMLGLPN…LTRDIMDFIE (174 aa)) enclose the OBG-type G domain. GTP-binding positions include 166 to 173 (GLPNAGKS), 191 to 195 (FTTLV), 213 to 216 (DIPG), 283 to 286 (NKID), and 314 to 316 (SAA). Positions 173 and 193 each coordinate Mg(2+).

The protein belongs to the TRAFAC class OBG-HflX-like GTPase superfamily. OBG GTPase family. As to quaternary structure, monomer. The cofactor is Mg(2+).

It is found in the cytoplasm. An essential GTPase which binds GTP, GDP and possibly (p)ppGpp with moderate affinity, with high nucleotide exchange rates and a fairly low GTP hydrolysis rate. Plays a role in control of the cell cycle, stress response, ribosome biogenesis and in those bacteria that undergo differentiation, in morphogenesis control. This is GTPase Obg from Actinobacillus pleuropneumoniae serotype 5b (strain L20).